Here is a 271-residue protein sequence, read N- to C-terminus: MHAASREALAKVSSDLDAALAADNTMAVAAQAGTELFDVVDILDGDRALRVAVADSSKDAHSRVGLIEAVFGGKVSPSVLEVLKDAAEQTWSTPREFRAGLVQLGRRALLRSAEKQGQLGQVEDELFRLSRILDRESKLTQLLSDRTQEIGGRRDLLAKVLYGKVTAVTEALALQAIGRPEHNPIDDIAALAGAVAELQGRSVAHVVTAVELNEGQQQALAEKLGRIYGRAMSIHSEVDTSLLGGMIIRVGDEVIDGSTSGKLERLRASFA.

Belongs to the ATPase delta chain family. In terms of assembly, F-type ATPases have 2 components, F(1) - the catalytic core - and F(0) - the membrane proton channel. F(1) has five subunits: alpha(3), beta(3), gamma(1), delta(1), epsilon(1). F(0) has three main subunits: a(1), b(2) and c(10-14). The alpha and beta chains form an alternating ring which encloses part of the gamma chain. F(1) is attached to F(0) by a central stalk formed by the gamma and epsilon chains, while a peripheral stalk is formed by the delta and b chains.

Its subcellular location is the cell membrane. F(1)F(0) ATP synthase produces ATP from ADP in the presence of a proton or sodium gradient. F-type ATPases consist of two structural domains, F(1) containing the extramembraneous catalytic core and F(0) containing the membrane proton channel, linked together by a central stalk and a peripheral stalk. During catalysis, ATP synthesis in the catalytic domain of F(1) is coupled via a rotary mechanism of the central stalk subunits to proton translocation. In terms of biological role, this protein is part of the stalk that links CF(0) to CF(1). It either transmits conformational changes from CF(0) to CF(1) or is implicated in proton conduction. The chain is ATP synthase subunit delta from Corynebacterium glutamicum (strain R).